A 446-amino-acid polypeptide reads, in one-letter code: Tubulin beta chain (446 aa).

Residues glutamine 11, glutamate 69, serine 138, glycine 142, threonine 143, glycine 144, asparagine 204, and asparagine 226 each coordinate GTP. Glutamate 69 is a binding site for Mg(2+). The interval 423 to 446 is disordered; sequence QQYQDAGVDEEEEEYEEEPLPEDE. Acidic residues predominate over residues 429-446; the sequence is GVDEEEEEYEEEPLPEDE.

The protein belongs to the tubulin family. Dimer of alpha and beta chains. A typical microtubule is a hollow water-filled tube with an outer diameter of 25 nm and an inner diameter of 15 nM. Alpha-beta heterodimers associate head-to-tail to form protofilaments running lengthwise along the microtubule wall with the beta-tubulin subunit facing the microtubule plus end conferring a structural polarity. Microtubules usually have 13 protofilaments but different protofilament numbers can be found in some organisms and specialized cells. Mg(2+) serves as cofactor.

The protein localises to the cytoplasm. The protein resides in the cytoskeleton. Its function is as follows. Tubulin is the major constituent of microtubules, a cylinder consisting of laterally associated linear protofilaments composed of alpha- and beta-tubulin heterodimers. Microtubules grow by the addition of GTP-tubulin dimers to the microtubule end, where a stabilizing cap forms. Below the cap, tubulin dimers are in GDP-bound state, owing to GTPase activity of alpha-tubulin. This is Tubulin beta chain (TUBB) from Pestalotiopsis microspora.